A 181-amino-acid chain; its full sequence is Macro domain-containing protein in sno 5'region (181 aa).

The Macro domain maps to 1-172 (MTTITLVQGD…TFARELGDAG (172 aa)).

It belongs to the MacroD-type family.

This is Macro domain-containing protein in sno 5'region from Streptomyces nogalater.